The following is an 842-amino-acid chain: Alanine--tRNA ligase (842 aa).

Residues His-549, His-553, Cys-650, and His-654 each contribute to the Zn(2+) site.

The protein belongs to the class-II aminoacyl-tRNA synthetase family. Requires Zn(2+) as cofactor.

The protein localises to the cytoplasm. It carries out the reaction tRNA(Ala) + L-alanine + ATP = L-alanyl-tRNA(Ala) + AMP + diphosphate. Its function is as follows. Catalyzes the attachment of alanine to tRNA(Ala) in a two-step reaction: alanine is first activated by ATP to form Ala-AMP and then transferred to the acceptor end of tRNA(Ala). Also edits incorrectly charged Ser-tRNA(Ala) and Gly-tRNA(Ala) via its editing domain. The chain is Alanine--tRNA ligase from Campylobacter jejuni subsp. jejuni serotype O:2 (strain ATCC 700819 / NCTC 11168).